A 427-amino-acid polypeptide reads, in one-letter code: Glutamate-1-semialdehyde 2,1-aminomutase (427 aa).

The residue at position 265 (Lys265) is an N6-(pyridoxal phosphate)lysine.

The protein belongs to the class-III pyridoxal-phosphate-dependent aminotransferase family. HemL subfamily. As to quaternary structure, homodimer. The cofactor is pyridoxal 5'-phosphate.

It is found in the cytoplasm. It carries out the reaction (S)-4-amino-5-oxopentanoate = 5-aminolevulinate. It functions in the pathway porphyrin-containing compound metabolism; protoporphyrin-IX biosynthesis; 5-aminolevulinate from L-glutamyl-tRNA(Glu): step 2/2. The sequence is that of Glutamate-1-semialdehyde 2,1-aminomutase from Actinobacillus succinogenes (strain ATCC 55618 / DSM 22257 / CCUG 43843 / 130Z).